A 176-amino-acid chain; its full sequence is Beta-carotene hydroxylase (176 aa).

Residues 10 to 126 (LSVIAMEGIA…AHRLHHAVRG (117 aa)) form the Fatty acid hydroxylase domain. Residues 152-176 (HGRPPKRDAAKDRPDAASPSSSSPE) form a disordered region. A compositionally biased stretch (basic and acidic residues) spans 156–166 (PKRDAAKDRPD). Low complexity predominate over residues 167–176 (AASPSSSSPE).

This sequence belongs to the sterol desaturase family.

It functions in the pathway carotenoid biosynthesis; zeaxanthin biosynthesis. In terms of biological role, catalyzes the hydroxylation reaction from beta-carotene to zeaxanthin. The chain is Beta-carotene hydroxylase (crtZ) from Pseudescherichia vulneris (Escherichia vulneris).